The primary structure comprises 103 residues: Putative double-stranded DNA mimic protein HD_0986 (103 aa).

The protein belongs to the putative dsDNA mimic protein family.

In terms of biological role, may act as a double-stranded DNA (dsDNA) mimic. Probably regulates the activity of a dsDNA-binding protein. The polypeptide is Putative double-stranded DNA mimic protein HD_0986 (Haemophilus ducreyi (strain 35000HP / ATCC 700724)).